We begin with the raw amino-acid sequence, 545 residues long: T-complex protein 1 subunit gamma (545 aa).

Methionine 1 carries the post-translational modification N-acetylmethionine. The tract at residues 1 to 24 is disordered; it reads MMGHRPVLVLSQNTKRESGRKVQS. A Phosphoserine modification is found at serine 11. Lysine 15 participates in a covalent cross-link: Glycyl lysine isopeptide (Lys-Gly) (interchain with G-Cter in SUMO2). Glycine 42 contacts ADP. Residue glycine 42 participates in ATP binding. Mg(2+) is bound at residue aspartate 93. ADP is bound by residues glycine 94, threonine 95, threonine 96, serine 97, threonine 162, and lysine 163. Residues glycine 94, threonine 95, and threonine 96 each coordinate ATP. Serine 170 is modified (phosphoserine). N6-acetyllysine is present on lysine 222. A phosphoserine mark is found at serine 243 and serine 244. Residue tyrosine 247 is modified to Phosphotyrosine. Glycyl lysine isopeptide (Lys-Gly) (interchain with G-Cter in SUMO2) cross-links involve residues lysine 248 and lysine 249. Serine 252 carries the phosphoserine modification. Cysteine 366 and cysteine 372 form a disulfide bridge. Lysine 381 participates in a covalent cross-link: Glycyl lysine isopeptide (Lys-Gly) (interchain with G-Cter in SUMO2). Residue glycine 411 participates in ADP binding. Residue glycine 411 coordinates ATP. Threonine 430 and threonine 459 each carry phosphothreonine. Glycine 482, glutamate 483, glutamate 497, and lysine 502 together coordinate ADP. Glycine 482 serves as a coordination point for ATP. Residue glutamate 497 participates in ATP binding. The tract at residues 526–545 is disordered; the sequence is HKKKGDDQNRQTGAPDAGQE.

Belongs to the TCP-1 chaperonin family. In terms of assembly, component of the chaperonin-containing T-complex (TRiC), a hexadecamer composed of two identical back-to-back stacked rings enclosing a protein folding chamber. Each ring is made up of eight different subunits: TCP1/CCT1, CCT2, CCT3, CCT4, CCT5, CCT6A/CCT6, CCT7, CCT8. Interacts with PACRG. Interacts with DNAAF4. Interacts with DLEC1. Post-translationally, the N-terminus is blocked.

The protein localises to the cytoplasm. It carries out the reaction ATP + H2O = ADP + phosphate + H(+). Its function is as follows. Component of the chaperonin-containing T-complex (TRiC), a molecular chaperone complex that assists the folding of actin, tubulin and other proteins upon ATP hydrolysis. The TRiC complex mediates the folding of WRAP53/TCAB1, thereby regulating telomere maintenance. As part of the TRiC complex may play a role in the assembly of BBSome, a complex involved in ciliogenesis regulating transports vesicles to the cilia. In Mus musculus (Mouse), this protein is T-complex protein 1 subunit gamma (Cct3).